A 268-amino-acid polypeptide reads, in one-letter code: Putative esterase/lipase 2 (268 aa).

H29 is a catalytic residue. S98 (charge relay system) is an active-site residue.

It belongs to the lipase/esterase LIP3/BchO family.

The sequence is that of Putative esterase/lipase 2 from Mycoplasma genitalium (strain ATCC 33530 / DSM 19775 / NCTC 10195 / G37) (Mycoplasmoides genitalium).